The chain runs to 407 residues: MTQLINVNSRSYRLSSAPTIVICVDGCEQEYINQAIQAGQAPFLAELTDFGTVLTGDCVVPSFTNPNNLSIVTGAPPSVHGICGNFFFDQETQEEVLMNDAKYLRAPTILAEMAKAGQLVAVVTAKDKLRNLLGHQLKGICFSAEKADQVSLEEHGVENILARVGMPVPSVYSADLSEFVFAAGLSLLINERPDFMYLSTTDYVQHKHAPGTPEANAFYAMMDSYFKRYHEQGAIVAITADHGMNAKTDAIGRPNILFLQDLLDAQYGAQRTRVLLPITDPYVVHHGALGSYATVYLRDAVPQRDAIDFLAGIAGVEAVLTRSQACQRFELPEDRIGDLVVLGERLTVLGSAADKHDLSGLTVPLRSHGGVSEQKVPLIFNRKLVGLDSFDRLRNFDIIDLALNHLA.

Positions 25, 64, 202, 206, 241, 242, and 368 each coordinate Zn(2+). Substrate is bound by residues Thr-64 and Asp-202. Positions 242 and 368 each coordinate substrate.

This sequence belongs to the alkaline phosphatase family. PhnA subfamily. Homodimer. Requires Zn(2+) as cofactor.

It catalyses the reaction phosphonoacetate + H2O = acetate + phosphate + H(+). In terms of biological role, specifically hydrolyzes phosphonoacetate. Does not have activity on other organophosphonates or acetates. This chain is Phosphonoacetate hydrolase, found in Pseudomonas putida (Arthrobacter siderocapsulatus).